Reading from the N-terminus, the 354-residue chain is Methionine import ATP-binding protein MetN (354 aa).

Positions 8–250 constitute an ABC transporter domain; it reads LDHIDITFRQ…PKEALTQEFI (243 aa). 42–49 contacts ATP; that stretch reads GYSGAGKS.

Belongs to the ABC transporter superfamily. Methionine importer (TC 3.A.1.24) family. The complex is composed of two ATP-binding proteins (MetN), two transmembrane proteins (MetI) and a solute-binding protein (MetQ).

It localises to the cell membrane. It catalyses the reaction L-methionine(out) + ATP + H2O = L-methionine(in) + ADP + phosphate + H(+). It carries out the reaction D-methionine(out) + ATP + H2O = D-methionine(in) + ADP + phosphate + H(+). In terms of biological role, part of the ABC transporter complex MetNIQ involved in methionine import. Responsible for energy coupling to the transport system. This is Methionine import ATP-binding protein MetN from Streptococcus pyogenes serotype M1.